A 355-amino-acid chain; its full sequence is Peptide chain release factor 1 (355 aa).

Position 231 is an N5-methylglutamine (Gln-231). A compositionally biased stretch (basic and acidic residues) spans 280-291 (SERLAKESEARK). Residues 280–303 (SERLAKESEARKSQVGSGDRSERI) are disordered.

This sequence belongs to the prokaryotic/mitochondrial release factor family. Post-translationally, methylated by PrmC. Methylation increases the termination efficiency of RF1.

It is found in the cytoplasm. Its function is as follows. Peptide chain release factor 1 directs the termination of translation in response to the peptide chain termination codons UAG and UAA. This chain is Peptide chain release factor 1, found in Campylobacter jejuni subsp. jejuni serotype O:2 (strain ATCC 700819 / NCTC 11168).